Consider the following 287-residue polypeptide: Acetyl-coenzyme A carboxylase carboxyl transferase subunit beta (287 aa).

One can recognise a CoA carboxyltransferase N-terminal domain in the interval 36-287; it reads MWVKCDRCGK…KVLYKILELH (252 aa). The Zn(2+) site is built by cysteine 40, cysteine 43, cysteine 59, and cysteine 62. Residues 40–62 form a C4-type zinc finger; it reads CDRCGKTLYKKDLDENLKVCKFC.

This sequence belongs to the AccD/PCCB family. In terms of assembly, acetyl-CoA carboxylase is a heterohexamer composed of biotin carboxyl carrier protein (AccB), biotin carboxylase (AccC) and two subunits each of ACCase subunit alpha (AccA) and ACCase subunit beta (AccD). Requires Zn(2+) as cofactor.

It is found in the cytoplasm. The catalysed reaction is N(6)-carboxybiotinyl-L-lysyl-[protein] + acetyl-CoA = N(6)-biotinyl-L-lysyl-[protein] + malonyl-CoA. The protein operates within lipid metabolism; malonyl-CoA biosynthesis; malonyl-CoA from acetyl-CoA: step 1/1. Component of the acetyl coenzyme A carboxylase (ACC) complex. Biotin carboxylase (BC) catalyzes the carboxylation of biotin on its carrier protein (BCCP) and then the CO(2) group is transferred by the transcarboxylase to acetyl-CoA to form malonyl-CoA. The protein is Acetyl-coenzyme A carboxylase carboxyl transferase subunit beta of Clostridium novyi (strain NT).